Reading from the N-terminus, the 117-residue chain is MITKQSSNVLRKKRHLRLRKIVSGTSQRPRLNVFRSNKFLYVQIIDDTQQTTLCSANSKESNVLGSNIKAAEAVGALIAKKALAQGIKNVVFDRSGYLYHGKIKALADACRKSGLQF.

The protein belongs to the universal ribosomal protein uL18 family. In terms of assembly, part of the 50S ribosomal subunit; part of the 5S rRNA/L5/L18/L25 subcomplex. Contacts the 5S and 23S rRNAs.

In terms of biological role, this is one of the proteins that bind and probably mediate the attachment of the 5S RNA into the large ribosomal subunit, where it forms part of the central protuberance. In Onion yellows phytoplasma (strain OY-M), this protein is Large ribosomal subunit protein uL18.